Here is a 171-residue protein sequence, read N- to C-terminus: Protein-export protein SecB (171 aa).

The protein belongs to the SecB family. In terms of assembly, homotetramer, a dimer of dimers. One homotetramer interacts with 1 SecA dimer.

The protein resides in the cytoplasm. Functionally, one of the proteins required for the normal export of preproteins out of the cell cytoplasm. It is a molecular chaperone that binds to a subset of precursor proteins, maintaining them in a translocation-competent state. It also specifically binds to its receptor SecA. This Xanthomonas oryzae pv. oryzae (strain MAFF 311018) protein is Protein-export protein SecB.